Reading from the N-terminus, the 518-residue chain is Gypsy retrotransposon integrase-like protein 1 (518 aa).

The region spanning 135–293 is the Integrase catalytic domain; that stretch reads VVGNPWSVVT…PYFQMFNRNP (159 aa). Positions 326 to 348 are disordered; the sequence is NQTPAAGQMESSTSEELSKSKVA. Position 498 is a phosphoserine (Ser498).

This Rattus norvegicus (Rat) protein is Gypsy retrotransposon integrase-like protein 1 (GIN1).